The chain runs to 206 residues: Platelet glycoprotein Ib beta chain (206 aa).

Positions 1–25 (MGSGPRGALSLLLLLLAPPSRPAAG) are cleaved as a signal peptide. 2 cysteine pairs are disulfide-bonded: cysteine 26/cysteine 32 and cysteine 30/cysteine 39. The LRRNT domain occupies 27–55 (PAPCSCAGTLVDCGRRGLTWASLPTAFPV). Over 27-147 (PAPCSCAGTL…RAACAPGPLC (121 aa)) the chain is Extracellular. One copy of the LRR repeat lies at 60-83 (LVLTGNNLTALPPGLLDALPALRT). Asparagine 66 carries an N-linked (GlcNAc...) asparagine glycan. The region spanning 89 to 143 (NPWRCDCRLVPLRAWLAGRPERAPYRDLRCVAPPALRGRLLPYLAEDELRAACAP) is the LRRCT domain. 2 disulfides stabilise this stretch: cysteine 93–cysteine 118 and cysteine 95–cysteine 141. The chain crosses the membrane as a helical span at residues 148-172 (WGALAAQLALLGLGLLHALLLVLLL). The Cytoplasmic segment spans residues 173–206 (CRLRRLRARARARAAARLSLTDPLVAERAGTDES). Serine 191 carries the phosphoserine; by PKA modification. A Phosphothreonine modification is found at threonine 193.

As to quaternary structure, two GP-Ib beta are disulfide-linked to one GP-Ib alpha. GP-IX is complexed with the GP-Ib heterodimer via a non covalent linkage. Interacts with TRAF4. Expressed in heart and brain.

The protein localises to the membrane. Its function is as follows. Gp-Ib, a surface membrane protein of platelets, participates in the formation of platelet plugs by binding to von Willebrand factor, which is already bound to the subendothelium. The sequence is that of Platelet glycoprotein Ib beta chain (GP1BB) from Homo sapiens (Human).